The primary structure comprises 194 residues: MAFFCFIVLTYFIGAIPSGVWIGKAFKGVDVRDYGSKNSGATNSYRVLGAKLGVAVLIMDVLKGFIPLYIASKFNLVYNDLVILGLVAILAHTFSCFISFKGGKGVATSLGVFLFLIPVITLILLAIFILVAYFTKYVSLASITAAFLLPIFTFFTHKDSYLFALSVIIAVFVIYRHKTNISRLLSGTENKFKF.

6 helical membrane passes run 2 to 22, 52 to 72, 80 to 100, 112 to 132, 137 to 157, and 161 to 181; these read AFFC…GVWI, LGVA…YIAS, DLVI…FISF, VFLF…ILVA, YVSL…FFTH, and YLFA…KTNI.

This sequence belongs to the PlsY family. In terms of assembly, probably interacts with PlsX.

Its subcellular location is the cell inner membrane. It carries out the reaction an acyl phosphate + sn-glycerol 3-phosphate = a 1-acyl-sn-glycero-3-phosphate + phosphate. Its pathway is lipid metabolism; phospholipid metabolism. Its function is as follows. Catalyzes the transfer of an acyl group from acyl-phosphate (acyl-PO(4)) to glycerol-3-phosphate (G3P) to form lysophosphatidic acid (LPA). This enzyme utilizes acyl-phosphate as fatty acyl donor, but not acyl-CoA or acyl-ACP. This is Glycerol-3-phosphate acyltransferase from Fusobacterium nucleatum subsp. nucleatum (strain ATCC 25586 / DSM 15643 / BCRC 10681 / CIP 101130 / JCM 8532 / KCTC 2640 / LMG 13131 / VPI 4355).